The chain runs to 166 residues: 3-isopropylmalate dehydratase small subunit (166 aa).

Belongs to the LeuD family. LeuD type 2 subfamily. In terms of assembly, heterodimer of LeuC and LeuD.

It carries out the reaction (2R,3S)-3-isopropylmalate = (2S)-2-isopropylmalate. It functions in the pathway amino-acid biosynthesis; L-leucine biosynthesis; L-leucine from 3-methyl-2-oxobutanoate: step 2/4. In terms of biological role, catalyzes the isomerization between 2-isopropylmalate and 3-isopropylmalate, via the formation of 2-isopropylmaleate. In Moorella thermoacetica (strain ATCC 39073 / JCM 9320), this protein is 3-isopropylmalate dehydratase small subunit.